Consider the following 199-residue polypeptide: Protein PPP1R35 homolog (199 aa).

Residues Met-1–Ala-11 show a composition bias toward basic residues. Disordered regions lie at residues Met-1 to Val-23 and Glu-36 to Asn-60. The span at Cys-38–Asp-49 shows a compositional bias: polar residues.

The protein belongs to the PPP1R35 family. In terms of assembly, interacts with Ana3; this complex is recruited to daughter centrioles before their conversion to centrosomes.

It is found in the cytoplasm. Its subcellular location is the cytoskeleton. The protein resides in the microtubule organizing center. It localises to the centrosome. The protein localises to the centriole. Functionally, participates in the later stages of centriole assembly through the interaction with Ana3 leading to the centriole to centrosome conversion in somatic cells. The sequence is that of Protein PPP1R35 homolog from Drosophila melanogaster (Fruit fly).